Reading from the N-terminus, the 158-residue chain is Ribosomal RNA large subunit methyltransferase H (158 aa).

S-adenosyl-L-methionine contacts are provided by residues L73, G107, and 126-131; that span reads FGEITL.

Belongs to the RNA methyltransferase RlmH family. Homodimer.

The protein localises to the cytoplasm. The enzyme catalyses pseudouridine(1915) in 23S rRNA + S-adenosyl-L-methionine = N(3)-methylpseudouridine(1915) in 23S rRNA + S-adenosyl-L-homocysteine + H(+). Its function is as follows. Specifically methylates the pseudouridine at position 1915 (m3Psi1915) in 23S rRNA. In Rubrobacter xylanophilus (strain DSM 9941 / JCM 11954 / NBRC 16129 / PRD-1), this protein is Ribosomal RNA large subunit methyltransferase H.